Here is a 922-residue protein sequence, read N- to C-terminus: Putative ATP-dependent helicase/translocase YwqA (922 aa).

Residues 462–625 form the Helicase ATP-binding domain; the sequence is LFLRESGFGA…WSIFDFMNKG (164 aa). 475-482 is an ATP binding site; it reads DDMGLGKT. Positions 576 to 579 match the DEAQ box motif; that stretch reads DEAQ. A Helicase C-terminal domain is found at 753–907; that stretch reads KLLELMTAIR…QSENWITELS (155 aa).

It belongs to the SNF2/RAD54 helicase family. Interacts with the RNA polymerase core.

The sequence is that of Putative ATP-dependent helicase/translocase YwqA (ywqA) from Bacillus subtilis (strain 168).